The primary structure comprises 375 residues: Putative fimbrium tip subunit Fim1C (375 aa).

Positions 1-16 are cleaved as a signal peptide; that stretch reads MKLLANIFLSGLAILA. Residue Cys17 is the site of N-palmitoyl cysteine attachment. Cys17 carries the S-diacylglycerol cysteine lipid modification. A propeptide spanning residues 17–47 is cleaved from the precursor; it reads CVSCSKDEDPVLPLEGAKLSVAVKASGTATK.

This sequence belongs to the bacteroidetes fimbrillin superfamily. FimA/Mfa1 family. As to quaternary structure, may be part of the fimbrial tip.

Its subcellular location is the fimbrium. The protein resides in the cell outer membrane. Functionally, probably a component of the fimbrium tip. Fimbriae are filamentous appendages on the cell surface that mediate cell adhesion and biofilm formation. This chain is Putative fimbrium tip subunit Fim1C, found in Parabacteroides distasonis (strain ATCC 8503 / DSM 20701 / CIP 104284 / JCM 5825 / NCTC 11152).